Here is a 177-residue protein sequence, read N- to C-terminus: ATP synthase subunit delta (177 aa).

Belongs to the ATPase delta chain family. In terms of assembly, F-type ATPases have 2 components, F(1) - the catalytic core - and F(0) - the membrane proton channel. F(1) has five subunits: alpha(3), beta(3), gamma(1), delta(1), epsilon(1). F(0) has three main subunits: a(1), b(2) and c(10-14). The alpha and beta chains form an alternating ring which encloses part of the gamma chain. F(1) is attached to F(0) by a central stalk formed by the gamma and epsilon chains, while a peripheral stalk is formed by the delta and b chains.

The protein resides in the cell inner membrane. In terms of biological role, f(1)F(0) ATP synthase produces ATP from ADP in the presence of a proton or sodium gradient. F-type ATPases consist of two structural domains, F(1) containing the extramembraneous catalytic core and F(0) containing the membrane proton channel, linked together by a central stalk and a peripheral stalk. During catalysis, ATP synthesis in the catalytic domain of F(1) is coupled via a rotary mechanism of the central stalk subunits to proton translocation. Functionally, this protein is part of the stalk that links CF(0) to CF(1). It either transmits conformational changes from CF(0) to CF(1) or is implicated in proton conduction. The chain is ATP synthase subunit delta from Leptothrix cholodnii (strain ATCC 51168 / LMG 8142 / SP-6) (Leptothrix discophora (strain SP-6)).